Here is a 167-residue protein sequence, read N- to C-terminus: Antibacterial peptide PMAP-37 (167 aa).

The signal sequence occupies residues 1-29; that stretch reads METQRASLCLGRWSLWLLLLALVVPSASA. Positions 30–130 are excised as a propeptide; that stretch reads QALSYREAVL…DITCNEIQSV (101 aa). Cystine bridges form between Cys85/Cys96 and Cys107/Cys124.

Belongs to the cathelicidin family.

Its subcellular location is the secreted. Functionally, exerts antimicrobial activity against both Gram-positive and negative bacteria with minimal inhibitory concentrations ranging over 1-4 micro molar. Its activity appears to be mediated by its ability to damage bacterial membranes. The chain is Antibacterial peptide PMAP-37 (PMAP37) from Sus scrofa (Pig).